A 511-amino-acid polypeptide reads, in one-letter code: Bifunctional purine biosynthesis protein PurH (511 aa).

The MGS-like domain maps to 1–145; it reads MKKRALVSVS…KNHKFVSVIV (145 aa).

This sequence belongs to the PurH family.

It catalyses the reaction (6R)-10-formyltetrahydrofolate + 5-amino-1-(5-phospho-beta-D-ribosyl)imidazole-4-carboxamide = 5-formamido-1-(5-phospho-D-ribosyl)imidazole-4-carboxamide + (6S)-5,6,7,8-tetrahydrofolate. The enzyme catalyses IMP + H2O = 5-formamido-1-(5-phospho-D-ribosyl)imidazole-4-carboxamide. Its pathway is purine metabolism; IMP biosynthesis via de novo pathway; 5-formamido-1-(5-phospho-D-ribosyl)imidazole-4-carboxamide from 5-amino-1-(5-phospho-D-ribosyl)imidazole-4-carboxamide (10-formyl THF route): step 1/1. It functions in the pathway purine metabolism; IMP biosynthesis via de novo pathway; IMP from 5-formamido-1-(5-phospho-D-ribosyl)imidazole-4-carboxamide: step 1/1. In Bacillus cereus (strain 03BB102), this protein is Bifunctional purine biosynthesis protein PurH.